Reading from the N-terminus, the 215-residue chain is 3,4-dihydroxy-2-butanone 4-phosphate synthase (215 aa).

D-ribulose 5-phosphate-binding positions include 37 to 38, D42, 150 to 154, and E174; these read RE and RPGHT. A Mg(2+)-binding site is contributed by E38. H153 provides a ligand contact to Mg(2+).

Belongs to the DHBP synthase family. Homodimer. Requires Mg(2+) as cofactor. It depends on Mn(2+) as a cofactor.

It catalyses the reaction D-ribulose 5-phosphate = (2S)-2-hydroxy-3-oxobutyl phosphate + formate + H(+). The protein operates within cofactor biosynthesis; riboflavin biosynthesis; 2-hydroxy-3-oxobutyl phosphate from D-ribulose 5-phosphate: step 1/1. Functionally, catalyzes the conversion of D-ribulose 5-phosphate to formate and 3,4-dihydroxy-2-butanone 4-phosphate. The polypeptide is 3,4-dihydroxy-2-butanone 4-phosphate synthase (Buchnera aphidicola subsp. Acyrthosiphon pisum (strain 5A)).